Here is a 294-residue protein sequence, read N- to C-terminus: Polyketide transferase grgF (294 aa).

Residues cysteine 115, aspartate 240, and histidine 269 contribute to the active site.

It belongs to the polyketide transferase af380 family. As to quaternary structure, homodimer.

Its pathway is secondary metabolite biosynthesis. Polyketide transferase; part of the gene cluster that mediates the biosynthesis of gregatin A, a fungal polyketide featuring an alkylated furanone core. The PKS grgA synthesizes C11 and C4 polyketide chains in the presence and absence of the trans-enoyl reductase grgB, respectively. The polyketide transferase grgF is then responsible for the fusion of the two carbon chains to produce the furanone skeleton of gregatin A. GrgF first undergoes a conformational change to an open form, and the active site Cys-115 is acylated by the C11 chain. After the elimination of the phosphopantetheinyl chain, the second polyketide chain of four carbons long is delivered adjacent to the enzyme-bound C11 chain. The catalytic histidine, His-269, deprotonates a proton from C-2 of the long chain, and the resultant carbanion attacks the C-1 carbonyl of the crotonyl group to perform Claisen condensation, by which the phosphopantetheinyl chain is released. Eventually, hydrolysis of the thioester linkage probably by a His-269-activated water molecule completes the reaction to afford the grgF final product. Next, the cytochrome P450 monooxygenase grgG accepts the unstable grgF final product as substrate and performs the oxidative cyclization to furnish the gregatin scaffold and leads to the formation of desmethylgregatin A. Finally, the O-methyltransferase grgD methylates the carboxyl group of desmethylgregatin A to provide gregatin A. This Penicillium sp protein is Polyketide transferase grgF.